A 261-amino-acid chain; its full sequence is THO complex subunit THP2 (261 aa).

Component of the THO complex, which is composed of HPR1, MFT1, THO2 and THP2. Together with SUB2, TEX1 and YRA1, THO forms the transcription/export (TREX) complex. THO associates with DNA and RNA in vitro.

The protein localises to the nucleus. Component the THO subcomplex of the TREX complex, which operates in coupling transcription elongation to mRNA export. The THO complex is recruited to transcribed genes and moves along the gene with the elongating polymerase during transcription. THO is important for stabilizing nascent RNA in the RNA polymerase II elongation complex by preventing formation of DNA:RNA hybrids behind the elongating polymerase. It functions in cotranscriptional formation of an export-competent messenger ribonucleoprotein particle (mRNP) by facilitating the loading of ATP-dependent RNA helicase SUB2 and the mRNA export factor YRA1 along the nascent mRNA. The chain is THO complex subunit THP2 (THP2) from Saccharomyces cerevisiae (strain ATCC 204508 / S288c) (Baker's yeast).